Consider the following 570-residue polypeptide: Glutamate--tRNA ligase (570 aa).

The 'HIGH' region motif lies at 107-117; sequence PNPDFVLHLGS.

This sequence belongs to the class-I aminoacyl-tRNA synthetase family. Glutamate--tRNA ligase type 2 subfamily.

The protein resides in the cytoplasm. It carries out the reaction tRNA(Glu) + L-glutamate + ATP = L-glutamyl-tRNA(Glu) + AMP + diphosphate. Catalyzes the attachment of glutamate to tRNA(Glu) in a two-step reaction: glutamate is first activated by ATP to form Glu-AMP and then transferred to the acceptor end of tRNA(Glu). The polypeptide is Glutamate--tRNA ligase (Pyrobaculum islandicum (strain DSM 4184 / JCM 9189 / GEO3)).